Reading from the N-terminus, the 229-residue chain is Large ribosomal subunit protein uL1 (229 aa).

This sequence belongs to the universal ribosomal protein uL1 family. Part of the 50S ribosomal subunit.

Binds directly to 23S rRNA. The L1 stalk is quite mobile in the ribosome, and is involved in E site tRNA release. Its function is as follows. Protein L1 is also a translational repressor protein, it controls the translation of the L11 operon by binding to its mRNA. This is Large ribosomal subunit protein uL1 from Streptococcus pneumoniae (strain Taiwan19F-14).